Reading from the N-terminus, the 116-residue chain is Large ribosomal subunit protein uL18 (116 aa).

This sequence belongs to the universal ribosomal protein uL18 family. Part of the 50S ribosomal subunit; part of the 5S rRNA/L5/L18/L25 subcomplex. Contacts the 5S and 23S rRNAs.

In terms of biological role, this is one of the proteins that bind and probably mediate the attachment of the 5S RNA into the large ribosomal subunit, where it forms part of the central protuberance. This Mycoplasma mycoides subsp. mycoides SC (strain CCUG 32753 / NCTC 10114 / PG1) protein is Large ribosomal subunit protein uL18.